Reading from the N-terminus, the 305-residue chain is MASRQPEVPALEASAPLGKMSLPIGIYRRAVSYDDTLEDPAPMTPPPSDMGSVPWKPVIPERKYQHLAKVEEGEASLPSPAMTLSSAIDSVDKVPVVKAKATHVIMNSLITKQTQESIQHFERQAGLRDAGYTPHKGLTTEETKYLRVAEALHKLKLQSGEVTKEERQPASAQSTPSTTPHSSPKQRPRGWFTSGSSTALPGPNPSTMDSGSGDKDRNLSDKWSLFGPRSLQKYDSGSFATQAYRGAQKPSPLELIRAQANRMAEDPAALKPPKMDIPVMEGKKQPPRAHNLKPRDLNVLTPTGF.

Residues 37–56 (LEDPAPMTPPPSDMGSVPWK) are disordered. Thr-44 carries the phosphothreonine modification. A Flavin-containing monooxygenase motif motif is present at residues 67-77 (LAKVEEGEASL). 2 disordered regions span residues 158 to 236 (QSGE…KYDS) and 259 to 305 (QANR…PTGF). Residues 169 to 183 (PASAQSTPSTTPHSS) show a composition bias toward low complexity. Residue Thr-175 is modified to Phosphothreonine. Ser-182 and Ser-183 each carry phosphoserine. A compositionally biased stretch (polar residues) spans 193–210 (TSGSSTALPGPNPSTMDS).

The protein belongs to the P33MONOX family. As to quaternary structure, interacts with NELFB, NOL12 and PRNP. Down-regulated in the occipital lobe of an early stage Alzheimer disease patients.

The protein resides in the cytoplasm. Potential NADPH-dependent oxidoreductase. May be involved in the regulation of neuronal survival, differentiation and axonal outgrowth. The polypeptide is Putative monooxygenase p33MONOX (KIAA1191) (Homo sapiens (Human)).